The sequence spans 498 residues: ATP synthase subunit beta, chloroplastic (498 aa).

Residue 172–179 (GGAGVGKT) coordinates ATP.

This sequence belongs to the ATPase alpha/beta chains family. In terms of assembly, F-type ATPases have 2 components, CF(1) - the catalytic core - and CF(0) - the membrane proton channel. CF(1) has five subunits: alpha(3), beta(3), gamma(1), delta(1), epsilon(1). CF(0) has four main subunits: a(1), b(1), b'(1) and c(9-12).

It localises to the plastid. The protein localises to the chloroplast thylakoid membrane. It carries out the reaction ATP + H2O + 4 H(+)(in) = ADP + phosphate + 5 H(+)(out). Its function is as follows. Produces ATP from ADP in the presence of a proton gradient across the membrane. The catalytic sites are hosted primarily by the beta subunits. This Aspidistra elatior (Cast-iron plant) protein is ATP synthase subunit beta, chloroplastic.